A 626-amino-acid polypeptide reads, in one-letter code: Chaperone protein HtpG (626 aa).

The tract at residues methionine 1 to arginine 341 is a; substrate-binding. The segment at glutamate 342–lysine 552 is b. Residues isoleucine 553–valine 626 form a c region.

This sequence belongs to the heat shock protein 90 family. Homodimer.

The protein resides in the cytoplasm. In terms of biological role, molecular chaperone. Has ATPase activity. The chain is Chaperone protein HtpG from Bacillus subtilis (strain 168).